The primary structure comprises 250 residues: Ubiquinone/menaquinone biosynthesis C-methyltransferase UbiE (250 aa).

Residues Thr-73, Asp-94, and 122–123 (DA) contribute to the S-adenosyl-L-methionine site.

Belongs to the class I-like SAM-binding methyltransferase superfamily. MenG/UbiE family.

It carries out the reaction a 2-demethylmenaquinol + S-adenosyl-L-methionine = a menaquinol + S-adenosyl-L-homocysteine + H(+). The enzyme catalyses a 2-methoxy-6-(all-trans-polyprenyl)benzene-1,4-diol + S-adenosyl-L-methionine = a 5-methoxy-2-methyl-3-(all-trans-polyprenyl)benzene-1,4-diol + S-adenosyl-L-homocysteine + H(+). Its pathway is quinol/quinone metabolism; menaquinone biosynthesis; menaquinol from 1,4-dihydroxy-2-naphthoate: step 2/2. It functions in the pathway cofactor biosynthesis; ubiquinone biosynthesis. Methyltransferase required for the conversion of demethylmenaquinol (DMKH2) to menaquinol (MKH2) and the conversion of 2-polyprenyl-6-methoxy-1,4-benzoquinol (DDMQH2) to 2-polyprenyl-3-methyl-6-methoxy-1,4-benzoquinol (DMQH2). This chain is Ubiquinone/menaquinone biosynthesis C-methyltransferase UbiE, found in Coxiella burnetii (strain RSA 493 / Nine Mile phase I).